Consider the following 103-residue polypeptide: Protein S100-A16 (103 aa).

Positions 12-47 (VIVLVENFYKYVSKYSLVKNKISKSSFREMLQKELN) constitute an EF-hand 1; degenerate domain. The EF-hand 2 domain maps to 54-89 (GNRKAADKLIQNLDANHDGRISFDEYWTLIGGITGP). Positions 67, 69, 71, 73, and 78 each coordinate Ca(2+).

It belongs to the S-100 family. In terms of assembly, homodimer. Interacts with TP53. As to expression, ubiquitous. Highly expressed in esophagus, adipose tissues and colon. Expressed at lower level in lung, brain, pancreas and skeletal muscle. Expression is up-regulated in tumors of bladder, lung, thyroid gland, pancreas and ovary. Expressed in astrocytes.

The protein resides in the nucleus. It is found in the nucleolus. It localises to the cytoplasm. Functionally, calcium-binding protein. Binds one calcium ion per monomer. Can promote differentiation of adipocytes (in vitro). Overexpression in preadipocytes increases their proliferation, enhances adipogenesis and reduces insulin-stimulated glucose uptake. The sequence is that of Protein S100-A16 from Homo sapiens (Human).